Reading from the N-terminus, the 252-residue chain is Phosphate import ATP-binding protein PstB (252 aa).

The ABC transporter domain occupies 6-247 (ITINNLNFYY…PRDKRTEDYI (242 aa)). 38 to 45 (GPSGCGKS) contacts ATP.

Belongs to the ABC transporter superfamily. Phosphate importer (TC 3.A.1.7) family. In terms of assembly, the complex is composed of two ATP-binding proteins (PstB), two transmembrane proteins (PstC and PstA) and a solute-binding protein (PstS).

It localises to the cell membrane. The enzyme catalyses phosphate(out) + ATP + H2O = ADP + 2 phosphate(in) + H(+). Part of the ABC transporter complex PstSACB involved in phosphate import. Responsible for energy coupling to the transport system. This Moorella thermoacetica (strain ATCC 39073 / JCM 9320) protein is Phosphate import ATP-binding protein PstB.